The chain runs to 270 residues: SAGA-associated factor 29 homolog A (270 aa).

An N-acetylserine modification is found at Ser2. Residues 85-113 (LPSGPTGQQRRKLEGNEQKRKRMKVDTDV) form a disordered region. A compositionally biased stretch (basic and acidic residues) spans 95–113 (RKLEGNEQKRKRMKVDTDV). An SGF29 C-terminal domain is found at 125-270 (EAYASLKGEQ…VVALPEGHRQ (146 aa)). Histone H3K4me3 N-terminus binding regions lie at residues 168–170 (DEE) and 217–220 (GTTA). The histone H3K4me3 binding stretch occupies residues 242 to 245 (FDDD).

The protein belongs to the SGF29 family. In terms of tissue distribution, expressed in roots, rosette leaves, cauline leaves, stems and flowers.

It localises to the nucleus. Functionally, chromatin reader component of the transcription regulatory histone acetylation (HAT) complex SAGA. Involved in salt stress tolerance. Enhances the effect of ADA2B in the positive regulation of salt-induced gene expression. In Arabidopsis thaliana (Mouse-ear cress), this protein is SAGA-associated factor 29 homolog A.